The chain runs to 80 residues: U-actitoxin-Avd9a (80 aa).

The N-terminal stretch at 1–20 (MNLKVLAVFVLCAILVVVTA) is a signal peptide. The propeptide occupies 21–39 (ERRGTETGVYKKDTLQDLI). The 36-residue stretch at 45 to 80 (CIDRFPTGTCKQVKKGGSCKNSDKYRMNCRKTCGLC) folds into the ShKT domain. 3 disulfides stabilise this stretch: C45–C80, C54–C73, and C63–C77. Residues 68–69 (KY) are crucial for binding to potassium channels.

It belongs to the sea anemone type 1 potassium channel toxin family. Type 1b subfamily.

It localises to the secreted. It is found in the nematocyst. Functionally, inhibits voltage-gated potassium channels (Kv1/KCNA). The chain is U-actitoxin-Avd9a from Anemonia viridis (Snakelocks anemone).